We begin with the raw amino-acid sequence, 578 residues long: ATP-dependent RNA helicase dbp3 (578 aa).

Positions 59–69 (KRSADEEASVK) are enriched in basic and acidic residues. The interval 59–117 (KRSADEEASVKRKEKKSKHEHKKHKKDKPSADKDRISKKDKKKSKKGKSKTKEESIEIN) is disordered. A compositionally biased stretch (basic residues) spans 70-85 (RKEKKSKHEHKKHKKD). Over residues 86 to 95 (KPSADKDRIS) the composition is skewed to basic and acidic residues. Over residues 96-107 (KKDKKKSKKGKS) the composition is skewed to basic residues. A Q motif motif is present at residues 167–193 (LQFDELDVSAKLREGLKNYKEPTPIQA). The Helicase ATP-binding domain occupies 196–373 (WPYLLAGRDV…ATFLKDPVKI (178 aa)). 209 to 216 (AETGSGKT) is an ATP binding site. A DEAD box motif is present at residues 316 to 319 (DEAD). The Helicase C-terminal domain maps to 402-550 (MLDNLLRKHL…DIPEGLFKFG (149 aa)).

This sequence belongs to the DEAD box helicase family. DDX5/DBP2 subfamily.

It is found in the nucleus. The protein localises to the nucleolus. The enzyme catalyses ATP + H2O = ADP + phosphate + H(+). Its function is as follows. ATP-dependent RNA helicase required for 60S ribosomal subunit synthesis. Involved in efficient pre-rRNA processing, predominantly at site A3, which is necessary for the normal formation of 25S and 5.8S rRNAs. The chain is ATP-dependent RNA helicase dbp3 (dbp3) from Schizosaccharomyces pombe (strain 972 / ATCC 24843) (Fission yeast).